Consider the following 387-residue polypeptide: MRKKILILGSTGSIGTQALEVIASRQDQFEVVGIAAGGRDPQLIIQQAQMLGLAADHVAVANEKSATQVSRALGAAVLSGRDAATDLVESVPADTVLNGLVGSMGLRATLATIQLGEVLALANKESLVAGGTFVTSQAAPGQIVPVDSEHSAMAQCLRSGASAEVSKLVLTASGGPFRGWSREEMWDVTPEQAAAHPTWSMGQMNTLNSATLINKGLELIEATLLFDIPADRIEVTVHPQSIVHSMVTFCDGATIAQASPPSMLLSISHALAWPHRVPEAQPALDFSQASTWDFMPVDNEAFPAVELAREVALKQGTYPAVYNAANEQAAAAFLRGRIKFPQIVDIVGEVVAGSSQFAGVASSVEEIIAHESESRRRADALVDKLSR.

Residues Thr11, Gly12, Ser13, Ile14, Gly37, Arg39, and Asn123 each contribute to the NADPH site. Lys124 provides a ligand contact to 1-deoxy-D-xylulose 5-phosphate. Glu125 is an NADPH binding site. Residue Asp147 coordinates Mn(2+). Positions 148, 149, 173, and 196 each coordinate 1-deoxy-D-xylulose 5-phosphate. Glu149 contributes to the Mn(2+) binding site. An NADPH-binding site is contributed by Gly202. The 1-deoxy-D-xylulose 5-phosphate site is built by Ser209, Asn214, Lys215, and Glu218. Position 218 (Glu218) interacts with Mn(2+).

This sequence belongs to the DXR family. The cofactor is Mg(2+). It depends on Mn(2+) as a cofactor.

The enzyme catalyses 2-C-methyl-D-erythritol 4-phosphate + NADP(+) = 1-deoxy-D-xylulose 5-phosphate + NADPH + H(+). Its pathway is isoprenoid biosynthesis; isopentenyl diphosphate biosynthesis via DXP pathway; isopentenyl diphosphate from 1-deoxy-D-xylulose 5-phosphate: step 1/6. Functionally, catalyzes the NADPH-dependent rearrangement and reduction of 1-deoxy-D-xylulose-5-phosphate (DXP) to 2-C-methyl-D-erythritol 4-phosphate (MEP). The chain is 1-deoxy-D-xylulose 5-phosphate reductoisomerase from Corynebacterium diphtheriae (strain ATCC 700971 / NCTC 13129 / Biotype gravis).